The chain runs to 214 residues: UBX domain-containing protein 10 (214 aa).

The span at 1–13 shows a compositional bias: basic residues; sequence MHVTRPKSSKGRS. Positions 1–79 are disordered; that stretch reads MHVTRPKSSK…AYDRPPEEPV (79 aa). Residues 16-25 are compositionally biased toward polar residues; that stretch reads MITNSSMIYT. The span at 49 to 60 shows a compositional bias: low complexity; the sequence is SLRSRAILRRSS. Residues 127 to 204 enclose the UBX domain; it reads PEESDLLLAI…GVLNKSVLCI (78 aa).

This sequence belongs to the UBXN10 family.

It is found in the cell projection. Its subcellular location is the cilium. Required for ciliogenesis. Acts as a tethering factor that facilitates recruitment of vcp/p97 to the intraflagellar transport complex B (IFT-B) in cilia. In Danio rerio (Zebrafish), this protein is UBX domain-containing protein 10.